A 118-amino-acid chain; its full sequence is Large ribosomal subunit protein bL19 (118 aa).

The protein belongs to the bacterial ribosomal protein bL19 family.

Its function is as follows. This protein is located at the 30S-50S ribosomal subunit interface and may play a role in the structure and function of the aminoacyl-tRNA binding site. The protein is Large ribosomal subunit protein bL19 of Frankia alni (strain DSM 45986 / CECT 9034 / ACN14a).